The primary structure comprises 423 residues: UPF0229 protein VV2350 (423 aa).

Positions 81–111 are disordered; it reads QFITGDKIERPKGGQGGGGAGDGDASADGEG. Residues 93 to 102 are compositionally biased toward gly residues; that stretch reads GGQGGGGAGD.

This sequence belongs to the UPF0229 family.

This Vibrio vulnificus (strain YJ016) protein is UPF0229 protein VV2350.